Here is a 236-residue protein sequence, read N- to C-terminus: 1-(5-phosphoribosyl)-5-[(5-phosphoribosylamino)methylideneamino] imidazole-4-carboxamide isomerase (236 aa).

Asp8 (proton acceptor) is an active-site residue. Asp129 functions as the Proton donor in the catalytic mechanism.

This sequence belongs to the HisA/HisF family.

The protein resides in the cytoplasm. The catalysed reaction is 1-(5-phospho-beta-D-ribosyl)-5-[(5-phospho-beta-D-ribosylamino)methylideneamino]imidazole-4-carboxamide = 5-[(5-phospho-1-deoxy-D-ribulos-1-ylimino)methylamino]-1-(5-phospho-beta-D-ribosyl)imidazole-4-carboxamide. It functions in the pathway amino-acid biosynthesis; L-histidine biosynthesis; L-histidine from 5-phospho-alpha-D-ribose 1-diphosphate: step 4/9. The polypeptide is 1-(5-phosphoribosyl)-5-[(5-phosphoribosylamino)methylideneamino] imidazole-4-carboxamide isomerase (Methanoregula boonei (strain DSM 21154 / JCM 14090 / 6A8)).